Consider the following 389-residue polypeptide: S-adenosylmethionine synthase 2 (389 aa).

Residue H17 coordinates ATP. Position 19 (D19) interacts with Mg(2+). A K(+)-binding site is contributed by E45. Positions 58 and 102 each coordinate L-methionine. The flexible loop stretch occupies residues 102–112 (QSADIAVGVDA). ATP-binding positions include 166-168 (DSK), 231-232 (RF), D240, 246-247 (RK), A263, and K267. D240 serves as a coordination point for L-methionine. K271 is a binding site for L-methionine.

Belongs to the AdoMet synthase family. In terms of assembly, homotetramer; dimer of dimers. It depends on Mg(2+) as a cofactor. Requires K(+) as cofactor.

Its subcellular location is the cytoplasm. The catalysed reaction is L-methionine + ATP + H2O = S-adenosyl-L-methionine + phosphate + diphosphate. The protein operates within amino-acid biosynthesis; S-adenosyl-L-methionine biosynthesis; S-adenosyl-L-methionine from L-methionine: step 1/1. In terms of biological role, catalyzes the formation of S-adenosylmethionine (AdoMet) from methionine and ATP. The overall synthetic reaction is composed of two sequential steps, AdoMet formation and the subsequent tripolyphosphate hydrolysis which occurs prior to release of AdoMet from the enzyme. This is S-adenosylmethionine synthase 2 from Rhodospirillum rubrum (strain ATCC 11170 / ATH 1.1.1 / DSM 467 / LMG 4362 / NCIMB 8255 / S1).